The primary structure comprises 348 residues: ECA polysaccharide chain length modulation protein (348 aa).

At 1–30 the chain is on the cytoplasmic side; it reads MTQPMPGKPAEDAENELDIRGLFRTLWAGK. A helical transmembrane segment spans residues 31–51; it reads LWIIGMGLAFALIALAYTFFA. At 52-322 the chain is on the periplasmic side; sequence RQEWSSTAIT…EPVKRDSPRR (271 aa). The helical transmembrane segment at 323 to 343 threads the bilayer; it reads AFLMIMWGIVGGLIGAGVALT. Topologically, residues 344 to 348 are cytoplasmic; sequence RRCSK.

It belongs to the WzzB/Cld/Rol family. Homooctamer. Probably part of a complex composed of WzxE, WzyE and WzzE.

It is found in the cell inner membrane. It participates in bacterial outer membrane biogenesis; enterobacterial common antigen biosynthesis. Its function is as follows. Modulates the polysaccharide chain length of enterobacterial common antigen (ECA). The sequence is that of ECA polysaccharide chain length modulation protein from Escherichia coli O157:H7.